Here is a 295-residue protein sequence, read N- to C-terminus: Deleted in azoospermia-like (295 aa).

Positions Met-1–Asn-10 are enriched in polar residues. Residues Met-1 to Ala-25 are disordered. Low complexity predominate over residues Ser-11–Ala-25. The 76-residue stretch at Asn-40 to Arg-115 folds into the RRM domain. Residues Lys-80–Asn-132 are homodimerization. Positions Ala-167–Gln-190 constitute a DAZ domain. Tyr-276 carries the post-translational modification Phosphotyrosine.

The protein belongs to the RRM DAZ family. Homodimer and heterodimer. Forms a heterodimer with DAZ. Interacts with BOLL, DAZAP1 and DAZAP2. Interacts with PUM2 Multiple DAZL RRMs can bind to a single RNA containing multiple GUU triplets. As to expression, testis specific.

The protein localises to the cytoplasm. It localises to the nucleus. RNA-binding protein, which is essential for gametogenesis in both males and females. Plays a central role during spermatogenesis. Acts by binding to the 3'-UTR of mRNA, specifically recognizing GUU triplets, and thereby regulating the translation of key transcripts. This Macaca fascicularis (Crab-eating macaque) protein is Deleted in azoospermia-like (DAZL).